Reading from the N-terminus, the 166-residue chain is Protein BioX (166 aa).

Helical transmembrane passes span 12-32 (ISLL…TGIP), 33-53 (GSEF…FGFK), 55-75 (YFLA…HSIL), 87-107 (VGLI…AGPI), and 117-137 (AFTL…GMVI).

The protein resides in the cell membrane. In terms of biological role, does not seem to be a permease of pimelate. Its role in biotin synthesis is not clear. This is Protein BioX (bioX) from Lysinibacillus sphaericus (Bacillus sphaericus).